We begin with the raw amino-acid sequence, 1029 residues long: MPKRTDLQTILILGSGPIQIGQAAEFDYSGTQALKALKKEGYRVVLVNSNPATIMTDPDLADATYLEPLTPEFVRKVIEKERPDALLPTLGGQTALNLAMELNANGTLKEFGVELIGANAEAIHKGEDREAFQAAMKKIGVETARGKMVHSLEEAIEYQKEIGLPIVIRPSFTLGGTGGGIAHTYEDFLKITEGGLRDSPVHSVLLEESILGWKEYELEVMRDHADTVVIITSIENFDPMGVHTGDSITVAPAQTLSDVEYQRLRDYSLAIIREIGVDTGGSNIQFAVNPENGRVIVIEMNPRVSRSSALASKATGFPIAKIAALLAVGYHLDELPNDITRVTPAAFEPTIDYVVTKIPRFAFEKFPGTPDALGTQMRSVGEVMAIGRTFKESLQKALRSTESDVRGAFAEMSTEDLRGLLYGNPRRLEAVIELLRRGEGVPAVHDATKIDPWFLSQIQEIVDAEKELLNLGPITEWKYELWREVKRLGFSDARIGEIVGLPELEVRALRKAAKATPVYKTVDTCAAEFEAYTPYHYSTYEWEDEVTPTDKPKVVILGSGPNRIGQGVEFDYATVHAVWALQEAGYETIMINSNPETVSTDYDTADRLYFEPLTFEDVMNIVEHEKPVGVIVQLGGQTPLKLAKRLAEAGAPIIGTLPETIHQAEDRASFNALCERLGLPQPRGKVAQTPEQARELAAELGFPLMVRPSYVLGGRAMRTVRSMEELTTYLDEVYAAVEGQPSILLDQFLEGALELDVDTLCDGERAVVAGIMEHVEAAGVHSGDSACVLPPVTLSPELLERVKADTERLALELGVKGLLNVQWAVKDGVAYILEANPRASRTVPFVSKAVNHPLAKYAARIAVGQTLEQIGFTETPLPDLYAVKEVHLPFLKFKGVSPILGPEMKSTGESMGIDTDPYLAYYRAELGAKSNLPLSGTALLLGDGLDGVAATLESAGLRVIHEQEGDRLPDLLIDVTGSPLLRTALERGVPIVSTREGAEWTAKAIAAAQGKTLGVRSLQAWQQREAAAS.

Positions M1–E402 are carboxyphosphate synthetic domain. ATP is bound by residues R129, R169, G175, G176, E208, I210, E215, G241, V242, H243, Q285, and E299. Positions Q133–V328 constitute an ATP-grasp 1 domain. Residues Q285, E299, and N301 each coordinate Mg(2+). Residues Q285, E299, and N301 each contribute to the Mn(2+) site. The interval S403–V546 is oligomerization domain. The carbamoyl phosphate synthetic domain stretch occupies residues T547–K929. Residues N671 to V863 form the ATP-grasp 2 domain. ATP contacts are provided by R707, Q747, L749, E754, G779, V780, H781, S782, Q822, and E834. Mg(2+) contacts are provided by Q822, E834, and N836. Residues Q822, E834, and N836 each contribute to the Mn(2+) site. Residues S930–A1028 form the MGS-like domain. The interval S930–S1029 is allosteric domain.

Belongs to the CarB family. In terms of assembly, composed of two chains; the small (or glutamine) chain promotes the hydrolysis of glutamine to ammonia, which is used by the large (or ammonia) chain to synthesize carbamoyl phosphate. Tetramer of heterodimers (alpha,beta)4. The cofactor is Mg(2+). Mn(2+) serves as cofactor.

The enzyme catalyses hydrogencarbonate + L-glutamine + 2 ATP + H2O = carbamoyl phosphate + L-glutamate + 2 ADP + phosphate + 2 H(+). The catalysed reaction is hydrogencarbonate + NH4(+) + 2 ATP = carbamoyl phosphate + 2 ADP + phosphate + 2 H(+). It participates in amino-acid biosynthesis; L-arginine biosynthesis; carbamoyl phosphate from bicarbonate: step 1/1. Its pathway is pyrimidine metabolism; UMP biosynthesis via de novo pathway; (S)-dihydroorotate from bicarbonate: step 1/3. Functionally, large subunit of the glutamine-dependent carbamoyl phosphate synthetase (CPSase). CPSase catalyzes the formation of carbamoyl phosphate from the ammonia moiety of glutamine, carbonate, and phosphate donated by ATP, constituting the first step of 2 biosynthetic pathways, one leading to arginine and/or urea and the other to pyrimidine nucleotides. The large subunit (synthetase) binds the substrates ammonia (free or transferred from glutamine from the small subunit), hydrogencarbonate and ATP and carries out an ATP-coupled ligase reaction, activating hydrogencarbonate by forming carboxy phosphate which reacts with ammonia to form carbamoyl phosphate. This Deinococcus geothermalis (strain DSM 11300 / CIP 105573 / AG-3a) protein is Carbamoyl phosphate synthase large chain.